We begin with the raw amino-acid sequence, 236 residues long: 1-(5-phosphoribosyl)-5-[(5-phosphoribosylamino)methylideneamino] imidazole-4-carboxamide isomerase (236 aa).

Asp-8 serves as the catalytic Proton acceptor. Asp-129 (proton donor) is an active-site residue.

Belongs to the HisA/HisF family.

The protein localises to the cytoplasm. It catalyses the reaction 1-(5-phospho-beta-D-ribosyl)-5-[(5-phospho-beta-D-ribosylamino)methylideneamino]imidazole-4-carboxamide = 5-[(5-phospho-1-deoxy-D-ribulos-1-ylimino)methylamino]-1-(5-phospho-beta-D-ribosyl)imidazole-4-carboxamide. The protein operates within amino-acid biosynthesis; L-histidine biosynthesis; L-histidine from 5-phospho-alpha-D-ribose 1-diphosphate: step 4/9. This Methanospirillum hungatei JF-1 (strain ATCC 27890 / DSM 864 / NBRC 100397 / JF-1) protein is 1-(5-phosphoribosyl)-5-[(5-phosphoribosylamino)methylideneamino] imidazole-4-carboxamide isomerase.